The following is an 852-amino-acid chain: Glutamine--tRNA ligase (852 aa).

Residues 1 to 42 (MGAFGWEQDRGAPFSGRSPRILTRMTDAPRPTAGADAPARPP) form a disordered region. The tract at residues 1 to 635 (MGAFGWEQDR…ITLKDTWGKQ (635 aa)) is glutaminyl-tRNA synthetase. Positions 28 to 38 (APRPTAGADAP) are enriched in low complexity. Residues 74–84 (PDPSGYAHLGH) carry the 'HIGH' region motif. The L-glutamine site is built by aspartate 107 and tyrosine 252. The 'KMSKS' region motif lies at 308–312 (ITSKR). Disordered stretches follow at residues 533 to 562 (EGEN…TAPV) and 632 to 681 (WGKQ…LTPE). Residues 636–852 (GGGTQQKAEG…LAAALKDALA (217 aa)) form a gatB-like region. Residues 664–675 (SSSPAKAHAPKA) are compositionally biased toward low complexity.

It in the N-terminal section; belongs to the class-I aminoacyl-tRNA synthetase family. The protein in the C-terminal section; belongs to the GatB/GatE family. As to quaternary structure, monomer.

The protein resides in the cytoplasm. It carries out the reaction tRNA(Gln) + L-glutamine + ATP = L-glutaminyl-tRNA(Gln) + AMP + diphosphate. In Deinococcus radiodurans (strain ATCC 13939 / DSM 20539 / JCM 16871 / CCUG 27074 / LMG 4051 / NBRC 15346 / NCIMB 9279 / VKM B-1422 / R1), this protein is Glutamine--tRNA ligase.